The following is a 1159-amino-acid chain: WASH complex subunit 5 (1159 aa).

Belongs to the strumpellin family. As to quaternary structure, component of the WASH complex.

It is found in the early endosome. Its function is as follows. Acts at least in part as component of the WASH complex which seems to regulate washc1 nucleation-promoting factor (NPF) activity and is required for its membrane targeting during endosomal sorting. The chain is WASH complex subunit 5 from Danio rerio (Zebrafish).